We begin with the raw amino-acid sequence, 493 residues long: Cytochrome P450 monooxygenase olcG (493 aa).

A helical membrane pass occupies residues 15 to 35 (GILATGALVIFVALFLATFQF). Residue Cys429 coordinates heme.

This sequence belongs to the cytochrome P450 family. It depends on heme as a cofactor.

The protein localises to the membrane. Its pathway is secondary metabolite biosynthesis; terpenoid biosynthesis. Its function is as follows. Cytochrome P450 monooxygenase; part of the gene cluster that mediates the biosynthesis of 15-deoxyoxalicine B. The first step of the pathway is the synthesis of nicotinyl-CoA from nicotinic acid by the nicotinic acid-CoA ligase olcI. Nicotinyl-CoA is then a substrate of polyketide synthase olcA to produce 4-hydroxy-6-(3-pyridinyl)-2H-pyran-2-one (HPPO) which is further prenylated by the polyprenyl transferase olcH to yield geranylgeranyl-HPPO. Geranylgeranyl pyrophosphate is provided by the cluster-specific geranylgeranyl pyrophosphate synthase olcC. The FAD-dependent monooxygenase olcE catalyzes the epoxidation of geranylgeranyl-HPPO and the terpene cyclase olcD catalyzes the cyclization of the terpenoid component, resulting in the formation of the tricyclic terpene moiety seen in predecaturin E. The cytochrome P450 monooxygenase then catalyzes the allylic oxidation of predecaturin E, which is followed by spirocylization with concomitant loss of one molecule of water to form decaturin E. Decaturin E is the substrate of the cytochrome P450 monooxygenase olcJ which hydroxylates it at the C-29 position to form decaturin F. The short-chain dehydrogenase/reductase olcF may catalyze the oxidation of decaturin F to generate the 29-hydroxyl-27-one intermediate, and subsequent hemiacetal formation probably leads to the formation of decaturin C. The dioxygenase olcK may be a peroxisomal enzyme that catalyzes the hydroxylation of decaturin C into decaturin A once decaturin C is shuttled into the peroxisome by the MFS transporter olcL. Finally the cytochrome P450 monooxygenase olcB catalyzes the oxidative rearrangement to yield 15-deoxyoxalicine B. In the absence of olcJ, decaturin E may be shunted to a pathway in which it is oxidized to a ketone, possibly by olcF, to form decaturin D, which undergoes further allylic oxidation to yield decaturin G. Moreover, in the absence of oclK or oclL, oclB can convert decaturin C into 15-deoxyoxalicine A. The protein is Cytochrome P450 monooxygenase olcG of Penicillium canescens.